The following is a 352-amino-acid chain: N-acetyl-gamma-glutamyl-phosphate reductase (352 aa).

Residue C155 is part of the active site.

Belongs to the NAGSA dehydrogenase family. Type 1 subfamily.

The protein resides in the cytoplasm. The catalysed reaction is N-acetyl-L-glutamate 5-semialdehyde + phosphate + NADP(+) = N-acetyl-L-glutamyl 5-phosphate + NADPH + H(+). Its pathway is amino-acid biosynthesis; L-arginine biosynthesis; N(2)-acetyl-L-ornithine from L-glutamate: step 3/4. Its function is as follows. Catalyzes the NADPH-dependent reduction of N-acetyl-5-glutamyl phosphate to yield N-acetyl-L-glutamate 5-semialdehyde. The sequence is that of N-acetyl-gamma-glutamyl-phosphate reductase from Cyanothece sp. (strain PCC 7425 / ATCC 29141).